The chain runs to 188 residues: dCTP deaminase (188 aa).

DCTP-binding positions include 111 to 116 (KSTYAR), 135 to 137 (TLE), glutamine 156, tyrosine 170, and glutamine 180. Glutamate 137 (proton donor/acceptor) is an active-site residue.

The protein belongs to the dCTP deaminase family. As to quaternary structure, homotrimer.

The catalysed reaction is dCTP + H2O + H(+) = dUTP + NH4(+). Its pathway is pyrimidine metabolism; dUMP biosynthesis; dUMP from dCTP (dUTP route): step 1/2. Catalyzes the deamination of dCTP to dUTP. The protein is dCTP deaminase of Ralstonia pickettii (strain 12J).